A 638-amino-acid polypeptide reads, in one-letter code: ATP-dependent rRNA helicase spb4 (638 aa).

The Q motif signature appears at 14 to 42 (WDAVNPPLSEWVLDAVSSMGFTRMTPVQA). One can recognise a Helicase ATP-binding domain in the interval 45–249 (IPLFMAHKDV…RVGLRNPVKV (205 aa)). 58–65 (AVTGSGKT) lines the ATP pocket. Positions 197-200 (DEAD) match the DEAD box motif. In terms of domain architecture, Helicase C-terminal spans 283 to 437 (ALKHILNSVQ…PITVSDAEAA (155 aa)). The stretch at 521–629 (AYKDKQREKR…AKADKDAEEG (109 aa)) forms a coiled coil. A disordered region spans residues 538-638 (MAESGQQQTT…GGDEEFTGFD (101 aa)). A compositionally biased stretch (basic and acidic residues) spans 574–597 (MKQVRQERKRWEKMTEEEKKKALE). Positions 625 to 638 (DAEEGGDEEFTGFD) are enriched in acidic residues.

Belongs to the DEAD box helicase family. DDX55/SPB4 subfamily. Component of pre-60S ribosomal complexes.

The protein localises to the nucleus. It localises to the nucleolus. The enzyme catalyses ATP + H2O = ADP + phosphate + H(+). Its function is as follows. ATP-binding RNA helicase involved in the biogenesis of 60S ribosomal subunits. Binds 90S pre-ribosomal particles and dissociates from pre-60S ribosomal particles after processing of 27SB pre-rRNA. Required for the normal formation of 18S rRNA through the processing of pre-rRNAs at sites A0, A1 and A2, and the normal formation of 25S and 5.8S rRNAs through the processing of pre-rRNAs at sites C1 and C2. This chain is ATP-dependent rRNA helicase spb4, found in Emericella nidulans (strain FGSC A4 / ATCC 38163 / CBS 112.46 / NRRL 194 / M139) (Aspergillus nidulans).